The following is a 105-amino-acid chain: Small ribosomal subunit protein uS10 (105 aa).

Belongs to the universal ribosomal protein uS10 family. As to quaternary structure, part of the 30S ribosomal subunit.

Its function is as follows. Involved in the binding of tRNA to the ribosomes. This chain is Small ribosomal subunit protein uS10, found in Synechocystis sp. (strain ATCC 27184 / PCC 6803 / Kazusa).